Consider the following 122-residue polypeptide: Large ribosomal subunit protein bL19c (122 aa).

The protein belongs to the bacterial ribosomal protein bL19 family.

Its subcellular location is the plastid. The protein localises to the chloroplast. The polypeptide is Large ribosomal subunit protein bL19c (rpl19) (Rhodomonas salina (Cryptomonas salina)).